A 150-amino-acid polypeptide reads, in one-letter code: Cytochrome c oxidase subunit 5A, mitochondrial (150 aa).

The N-terminal 41 residues, 1 to 41 (MLGAALRRCAVAATSRAGPRGLLHSAPNPGPAAAIQSVRCY), are a transit peptide targeting the mitochondrion. Residues 2-17 (LGAALRRCAVAATSRA) carry the SIFI-degron motif. N6-acetyllysine is present on residues K87 and K113. Position 141 is a phosphothreonine (T141).

It belongs to the cytochrome c oxidase subunit 5A family. As to quaternary structure, component of the cytochrome c oxidase (complex IV, CIV), a multisubunit enzyme composed of 14 subunits. The complex is composed of a catalytic core of 3 subunits MT-CO1, MT-CO2 and MT-CO3, encoded in the mitochondrial DNA, and 11 supernumerary subunits COX4I, COX5A, COX5B, COX6A, COX6B, COX6C, COX7A, COX7B, COX7C, COX8 and NDUFA4, which are encoded in the nuclear genome. The complex exists as a monomer or a dimer and forms supercomplexes (SCs) in the inner mitochondrial membrane with NADH-ubiquinone oxidoreductase (complex I, CI) and ubiquinol-cytochrome c oxidoreductase (cytochrome b-c1 complex, complex III, CIII), resulting in different assemblies (supercomplex SCI(1)III(2)IV(1) and megacomplex MCI(2)III(2)IV(2)). Interacts with AFG1L. Interacts with RAB5IF. In terms of processing, in response to mitochondrial stress, the precursor protein is ubiquitinated by the SIFI complex in the cytoplasm before mitochondrial import, leading to its degradation. Within the SIFI complex, UBR4 initiates ubiquitin chain that are further elongated or branched by KCMF1.

It localises to the mitochondrion inner membrane. It functions in the pathway energy metabolism; oxidative phosphorylation. Component of the cytochrome c oxidase, the last enzyme in the mitochondrial electron transport chain which drives oxidative phosphorylation. The respiratory chain contains 3 multisubunit complexes succinate dehydrogenase (complex II, CII), ubiquinol-cytochrome c oxidoreductase (cytochrome b-c1 complex, complex III, CIII) and cytochrome c oxidase (complex IV, CIV), that cooperate to transfer electrons derived from NADH and succinate to molecular oxygen, creating an electrochemical gradient over the inner membrane that drives transmembrane transport and the ATP synthase. Cytochrome c oxidase is the component of the respiratory chain that catalyzes the reduction of oxygen to water. Electrons originating from reduced cytochrome c in the intermembrane space (IMS) are transferred via the dinuclear copper A center (CU(A)) of subunit 2 and heme A of subunit 1 to the active site in subunit 1, a binuclear center (BNC) formed by heme A3 and copper B (CU(B)). The BNC reduces molecular oxygen to 2 water molecules using 4 electrons from cytochrome c in the IMS and 4 protons from the mitochondrial matrix. This is Cytochrome c oxidase subunit 5A, mitochondrial (COX5A) from Saguinus labiatus (Red-chested mustached tamarin).